The primary structure comprises 355 residues: UDP-N-acetylglucosamine--N-acetylmuramyl-(pentapeptide) pyrophosphoryl-undecaprenol N-acetylglucosamine transferase (355 aa).

UDP-N-acetyl-alpha-D-glucosamine-binding positions include 15 to 17, Asn-127, Arg-163, Ser-191, Ile-244, 263 to 268, and Gln-288; these read TGG and ALTVSE.

The protein belongs to the glycosyltransferase 28 family. MurG subfamily.

The protein localises to the cell inner membrane. It carries out the reaction di-trans,octa-cis-undecaprenyl diphospho-N-acetyl-alpha-D-muramoyl-L-alanyl-D-glutamyl-meso-2,6-diaminopimeloyl-D-alanyl-D-alanine + UDP-N-acetyl-alpha-D-glucosamine = di-trans,octa-cis-undecaprenyl diphospho-[N-acetyl-alpha-D-glucosaminyl-(1-&gt;4)]-N-acetyl-alpha-D-muramoyl-L-alanyl-D-glutamyl-meso-2,6-diaminopimeloyl-D-alanyl-D-alanine + UDP + H(+). Its pathway is cell wall biogenesis; peptidoglycan biosynthesis. Functionally, cell wall formation. Catalyzes the transfer of a GlcNAc subunit on undecaprenyl-pyrophosphoryl-MurNAc-pentapeptide (lipid intermediate I) to form undecaprenyl-pyrophosphoryl-MurNAc-(pentapeptide)GlcNAc (lipid intermediate II). This Escherichia coli (strain K12 / MC4100 / BW2952) protein is UDP-N-acetylglucosamine--N-acetylmuramyl-(pentapeptide) pyrophosphoryl-undecaprenol N-acetylglucosamine transferase.